The primary structure comprises 329 residues: 4-hydroxythreonine-4-phosphate dehydrogenase (329 aa).

Positions 136 and 137 each coordinate substrate. A divalent metal cation contacts are provided by His-166, His-211, and His-266. Positions 274, 283, and 292 each coordinate substrate.

This sequence belongs to the PdxA family. Homodimer. Requires Zn(2+) as cofactor. Mg(2+) is required as a cofactor. Co(2+) serves as cofactor.

It is found in the cytoplasm. It catalyses the reaction 4-(phosphooxy)-L-threonine + NAD(+) = 3-amino-2-oxopropyl phosphate + CO2 + NADH. Its pathway is cofactor biosynthesis; pyridoxine 5'-phosphate biosynthesis; pyridoxine 5'-phosphate from D-erythrose 4-phosphate: step 4/5. In terms of biological role, catalyzes the NAD(P)-dependent oxidation of 4-(phosphooxy)-L-threonine (HTP) into 2-amino-3-oxo-4-(phosphooxy)butyric acid which spontaneously decarboxylates to form 3-amino-2-oxopropyl phosphate (AHAP). The chain is 4-hydroxythreonine-4-phosphate dehydrogenase from Pseudomonas putida (strain ATCC 47054 / DSM 6125 / CFBP 8728 / NCIMB 11950 / KT2440).